A 368-amino-acid polypeptide reads, in one-letter code: Cystathionine beta-lyase (368 aa).

At K221 the chain carries N6-(pyridoxal phosphate)lysine.

Belongs to the class-II pyridoxal-phosphate-dependent aminotransferase family. MalY/PatB cystathionine beta-lyase subfamily. Pyridoxal 5'-phosphate serves as cofactor.

It carries out the reaction L,L-cystathionine + H2O = L-homocysteine + pyruvate + NH4(+). The enzyme catalyses an S-substituted L-cysteine + H2O = a thiol + pyruvate + NH4(+). It participates in amino-acid biosynthesis; L-methionine biosynthesis via de novo pathway; L-homocysteine from L-cystathionine: step 1/1. In terms of biological role, catalyzes the transformation of cystathionine to homocysteine. The protein is Cystathionine beta-lyase (metC) of Corynebacterium glutamicum (Brevibacterium saccharolyticum).